The chain runs to 715 residues: Solute carrier organic anion transporter family member 1C1 (715 aa).

Topologically, residues 1–43 (MDTSSKENAHLFHKNSAQPAGGPSFTVGYPSTEEARPCCGKLK) are cytoplasmic. The helical transmembrane segment at 44-63 (VFLGALSFVYFAKALAEGYL) threads the bilayer. Residues 64–82 (KSTVTQIERRFEIPSSLVG) are Extracellular-facing. The chain crosses the membrane as a helical span at residues 83 to 103 (IIDGSFEIGNLLVITFVSYFG). Residues 104–109 (AKLHRP) are Cytoplasmic-facing. Residues 110–134 (KIIGAGCLVMGFGTMLIAVPQFFME) form a helical membrane-spanning segment. Residues 135–187 (KYSYEKYERYSPSSNVTPSISPCYLESSSPSPSSILGKSQNKISHECVGDSSS) are Extracellular-facing. Residues 188 to 216 (SMWVYVFLGNLLRGLGETPIQPLGIAYLD) traverse the membrane as a helical segment. At 217 to 235 (DFASEDNAAFYIGCVQTVA) the chain is on the cytoplasmic side. A helical transmembrane segment spans residues 236–256 (IIGPIFGFLLGSLCAKLYVDI). The Extracellular portion of the chain corresponds to 257 to 274 (GFVNLDHITITPKDPQWV). The chain crosses the membrane as a helical span at residues 275–299 (GAWWLGYLIAGFLSLLAAVPFWCLP). At 300 to 351 (KTLPRSQSRENSGSTSEKSKFIDDPIHYQMAPGDDKMKIMEMAKDFLPSLKT) the chain is on the cytoplasmic side. The helical transmembrane segment at 352-373 (LFRNPVYILYLCASTVQFNSLF) threads the bilayer. Residues 374 to 393 (GMVTYKPKYIEQQYGQSSSK) are Extracellular-facing. The chain crosses the membrane as a helical span at residues 394–417 (ANFVIGLINIPAVALGIFSGGIVM). Residues 418–421 (KKFR) are Cytoplasmic-facing. The helical transmembrane segment at 422-445 (LGICEATKLYLGSSVFGYLLFLSL) threads the bilayer. Topologically, residues 446–557 (FALGCENSSV…NGCSQMFLYF (112 aa)) are extracellular. N-linked (GlcNAc...) asparagine glycosylation occurs at Asn452. In terms of domain architecture, Kazal-like spans 473–528 (RALFSDCNSRCKCSDSKWEPMCGDNGITYVSACLAGCQSSSRSGKNIIFSNCTCVG). 3 disulfide bridges follow: Cys479-Cys509, Cys485-Cys505, and Cys494-Cys526. N-linked (GlcNAc...) asparagine glycosylation is found at Asn523 and Asn536. Residues 558–580 (LVISVITSYTLSLGGIPGYILLL) traverse the membrane as a helical segment. The Cytoplasmic portion of the chain corresponds to 581 to 589 (RCIQPQLKS). The chain crosses the membrane as a helical span at residues 590–615 (FALGIYTLAVRVLAGIPAPVYFGVLI). Over 616–649 (DTSCLKWGFKKCGSRGSCRLYDSHAFRHIYLGLT) the chain is Extracellular. The helical transmembrane segment at 650-667 (TLLGTVSVFLSMAVLFVL) threads the bilayer. Residues 668 to 715 (KKKYVSKHSSLITTREKIGMSSSIKKETCAARDRGLQPKYWPGKETRL) are Cytoplasmic-facing.

Belongs to the organo anion transporter (TC 2.A.60) family. Widely expressed throughout the brain except in the cerebellum. Not detected in kidney, heart, lung, skeletal muscle, spleen, liver, nor testis. Highly expressed in cerebral microvessels throughout the brain and in the choroid plexus (at mRNA and protein level).

It localises to the cell membrane. It catalyses the reaction 3,3',5'-triiodo-L-thyronine(out) = 3,3',5'-triiodo-L-thyronine(in). The catalysed reaction is L-thyroxine(out) = L-thyroxine(in). It carries out the reaction L-thyroxine sulfate(out) = L-thyroxine sulfate(in). The enzyme catalyses 17beta-estradiol 17-O-(beta-D-glucuronate)(out) = 17beta-estradiol 17-O-(beta-D-glucuronate)(in). It catalyses the reaction 3,3',5-triiodo-L-thyronine(out) = 3,3',5-triiodo-L-thyronine(in). Functionally, mediates the Na(+)-independent high affinity transport of thyroid hormones at the plasma membrane of brain capillary endothelial cells. The transport activity of substrates L-thyroxine (T4) and 3,3',5'-triiodo-L-thyronine (reverse T3, rT3) is much greater than that of 3,3',5-triiodo-L-thyronine (T3). The prehormone, T4, is the major form in the circulating blood and is converted to the active form, T3, by the iodothyronine-deiodinase in peripheral organs. T3 plays an essential role in brain development via binding to specific nuclear receptors (thyroid hormone receptor). Also transports organic anions such as the conjugated steroid 17-beta-glucuronosyl estradiol (17beta-estradiol 17-O-(beta-D-glucuronate)). Transports T4 and estrone-3-sulfate in a pH-insensitive manner. May serve as a drug efflux system at the blood brain barrier. The sequence is that of Solute carrier organic anion transporter family member 1C1 (Slco1c1) from Mus musculus (Mouse).